The following is a 387-amino-acid chain: MAGSDPGSRGSSPQPPHSDWGRLEAAFLSGWRNFWQSVGKERAAPRASAEEVDEEASSLTRLPIDVQLYILSFLSPHDLCQLGSTSRYWNETVRDPILWRYFLLRDLPSWSSVDWKSLPDLEILKKPISEVTNGAFFDYMAVYKMCCPHTRRSSKSSRPMYGAVTSFLHSLIIQNEPRFAMFGPGLEELNTSLVLSLMSSEELCPTAGLPQRQIDGIGSGVSFQLNNQHKFNILILYSTTRKERDRAREEHTSAVNKMFSVQNEGDDQQGSRYSVIPQIQKVCEVVDGFIYVANAEAHKRHEWQDEFSRIMAMTDPAFGSSGRPMLVLSCISQANVKRMPCFYLAHELRLNHLNHPWMVQDTEAETLTGFLNGIQWILEEVESKHAR.

A phosphoserine mark is found at S11, S12, and S48. One can recognise an F-box domain in the interval 56–102 (ASSLTRLPIDVQLYILSFLSPHDLCQLGSTSRYWNETVRDPILWRYF).

In terms of assembly, homodimer. Part of the SCF (SKP1-CUL1-F-box) E3 ubiquitin-protein ligase complex SCF(FBXO4) formed of CUL1, SKP1, RBX1 and FBXO4. Interacts with TERF1; this interaction is prevented in the presence of GNL3L. Identified in a complex with CRYAB and CCND1. In terms of processing, phosphorylation at Ser-11 varies during the cell cycle. It is low in resting cells and high in the S phase and the G2/M phase of the cell cycle. Phosphorylation is decreased during late G1 phase. Phosphorylation at Ser-11 promotes homodimerization and is necessary for optimal ubiquitin ligase activity towards CCND1.

Its subcellular location is the cytoplasm. Its pathway is protein modification; protein ubiquitination. Its function is as follows. Substrate recognition component of a SCF (SKP1-CUL1-F-box protein) E3 ubiquitin-protein ligase complex that mediates the ubiquitination and subsequent proteasomal degradation of target proteins. Promotes ubiquitination of cyclin-D1 (CCND1) and its subsequent proteasomal degradation. However, it does not act as a major regulator of CCND1 stability during the G1/S transition. Recognizes TERF1 and promotes its ubiquitination together with UBE2D1. Promotes ubiquitination of FXR1 following phosphorylation of FXR1 by GSK3B, leading to FXR1 degradation by the proteasome. The protein is F-box only protein 4 (FBXO4) of Bos taurus (Bovine).